The primary structure comprises 385 residues: Glutamate 5-kinase (385 aa).

Lysine 17 contacts ATP. Residues serine 64, aspartate 151, and asparagine 165 each contribute to the substrate site. ATP is bound at residue 185–186; the sequence is SD. The PUA domain maps to 291-367; that stretch reads SGTVRVDAGA…DQIENVLGYS (77 aa).

It belongs to the glutamate 5-kinase family.

Its subcellular location is the cytoplasm. The enzyme catalyses L-glutamate + ATP = L-glutamyl 5-phosphate + ADP. It functions in the pathway amino-acid biosynthesis; L-proline biosynthesis; L-glutamate 5-semialdehyde from L-glutamate: step 1/2. In terms of biological role, catalyzes the transfer of a phosphate group to glutamate to form L-glutamate 5-phosphate. The sequence is that of Glutamate 5-kinase from Methanosarcina mazei (strain ATCC BAA-159 / DSM 3647 / Goe1 / Go1 / JCM 11833 / OCM 88) (Methanosarcina frisia).